The chain runs to 440 residues: 3-phosphoshikimate 1-carboxyvinyltransferase (440 aa).

Residues Lys-25, Ser-26, and Arg-30 each contribute to the 3-phosphoshikimate site. Lys-25 lines the phosphoenolpyruvate pocket. 2 residues coordinate phosphoenolpyruvate: Gly-96 and Arg-124. Positions 168, 169, 310, and 337 each coordinate 3-phosphoshikimate. Residue Gln-169 participates in phosphoenolpyruvate binding. Asp-310 serves as the catalytic Proton acceptor. Phosphoenolpyruvate is bound by residues Arg-341, Arg-382, and Lys-409.

It belongs to the EPSP synthase family. Monomer.

It is found in the cytoplasm. It catalyses the reaction 3-phosphoshikimate + phosphoenolpyruvate = 5-O-(1-carboxyvinyl)-3-phosphoshikimate + phosphate. Its pathway is metabolic intermediate biosynthesis; chorismate biosynthesis; chorismate from D-erythrose 4-phosphate and phosphoenolpyruvate: step 6/7. Functionally, catalyzes the transfer of the enolpyruvyl moiety of phosphoenolpyruvate (PEP) to the 5-hydroxyl of shikimate-3-phosphate (S3P) to produce enolpyruvyl shikimate-3-phosphate and inorganic phosphate. The sequence is that of 3-phosphoshikimate 1-carboxyvinyltransferase from Chlamydia trachomatis serovar A (strain ATCC VR-571B / DSM 19440 / HAR-13).